Consider the following 263-residue polypeptide: 4-hydroxy-tetrahydrodipicolinate reductase (263 aa).

Residues 8-13 (GACGKM), D34, 97-99 (GTT), and 123-126 (APNF) contribute to the NAD(+) site. The active-site Proton donor/acceptor is the H153. Residue H154 coordinates (S)-2,3,4,5-tetrahydrodipicolinate. The active-site Proton donor is the K157. 163–164 (GT) contributes to the (S)-2,3,4,5-tetrahydrodipicolinate binding site.

It belongs to the DapB family.

The protein localises to the cytoplasm. The catalysed reaction is (S)-2,3,4,5-tetrahydrodipicolinate + NAD(+) + H2O = (2S,4S)-4-hydroxy-2,3,4,5-tetrahydrodipicolinate + NADH + H(+). It carries out the reaction (S)-2,3,4,5-tetrahydrodipicolinate + NADP(+) + H2O = (2S,4S)-4-hydroxy-2,3,4,5-tetrahydrodipicolinate + NADPH + H(+). The protein operates within amino-acid biosynthesis; L-lysine biosynthesis via DAP pathway; (S)-tetrahydrodipicolinate from L-aspartate: step 4/4. Functionally, catalyzes the conversion of 4-hydroxy-tetrahydrodipicolinate (HTPA) to tetrahydrodipicolinate. The chain is 4-hydroxy-tetrahydrodipicolinate reductase from Carboxydothermus hydrogenoformans (strain ATCC BAA-161 / DSM 6008 / Z-2901).